Consider the following 382-residue polypeptide: Putative glutamate--cysteine ligase 2-1 (382 aa).

This sequence belongs to the glutamate--cysteine ligase type 2 family. YbdK subfamily.

It catalyses the reaction L-cysteine + L-glutamate + ATP = gamma-L-glutamyl-L-cysteine + ADP + phosphate + H(+). Functionally, ATP-dependent carboxylate-amine ligase which exhibits weak glutamate--cysteine ligase activity. This Frankia alni (strain DSM 45986 / CECT 9034 / ACN14a) protein is Putative glutamate--cysteine ligase 2-1.